The sequence spans 271 residues: MQDSPVQAVIFDWAGTIVDFGSFAPTSIFVEAFKSGFNFDINLAEAREPMGLGKWQHIEAVGKLPSVNQRWHQQFGHAMTSEEIDHIYATFMPLQKAKVADHAEPILNAIDVVNDLKDKGIKIGSCSGYPREVMDILIPAAAKYGYHPDYVVATDDLPQGGRPAAFMALKNAIELGVTNVSTCIKVDDAAPGIDEGHNAGMWTVGLLLSGNEAGLTYEEYQAADAETLSVAREKARLKLQKSTPHYLIDTIADLPEVIADIETRLLAGERP.

D12 acts as the Nucleophile in catalysis. Mg(2+)-binding residues include D12 and A14. The active-site Schiff-base intermediate with substrate is K54. D188 serves as a coordination point for Mg(2+).

Belongs to the HAD-like hydrolase superfamily. PhnX family. Homodimer. The cofactor is Mg(2+).

It catalyses the reaction phosphonoacetaldehyde + H2O = acetaldehyde + phosphate + H(+). Functionally, involved in phosphonate degradation. This chain is Phosphonoacetaldehyde hydrolase, found in Aliivibrio salmonicida (strain LFI1238) (Vibrio salmonicida (strain LFI1238)).